The chain runs to 420 residues: MYNLSRIIYRFSSVSLNPSTRASGFLLENASSKILQSATNRAFSAKSGSDGVGGDDNGWNISTGGSFGGTGSADLDWDNKSMWSTGLTKEHFDGVSVGRQKNAANPSSDNTPSDSGDVMSKLGPKEVALVNEMNEYDDLLKEIEQDNRQGRAFVDGIKQRMMEISVLLKQVKEPGARGSYLKDSEKTEMYRLHKENPEVYTIERLAKDYRIMRQRVHAILFLKEDEEEEERKLGRPLDDSVDRLLDEYPEFFISHDREFHVASLNYKPDFKVMPEGWDGTIKDMDEVHYEISKKEDDMLYEEFVRRFEFNKMKWRGEVMCHKYSRRRSSEGWKITVEKLGAKGKRGAGGGWKFMSLPDGSSRPLNEMEKVYVKRETPLRRRSIISTEVMRYSPANQKRRSKRKQKRKERRIACLKAGKQT.

Residues Met-1–Phe-11 constitute a mitochondrion transit peptide. Disordered regions lie at residues Arg-99–Ser-120 and Arg-390–Thr-420. Residues Asn-102–Asp-114 show a composition bias toward polar residues. A compositionally biased stretch (basic residues) spans Gln-396–Arg-409.

Component of the mitochondrial ribosome small subunit. As to expression, expressed at high levels in reproductive organs and, at lower levels, ubiquitously.

The protein resides in the mitochondrion. Essential for fertility (male and female gametophyte functions and development). Required for the integrity of female gametic mitochondria. Modulates male gametophyte functions, including pollen tube growth and style penetration. Involved in mitochondrial-driven cell-to-cell communication in embryo sacs during female gametes maturation (including embryogenesis initiation and endosperm development), especially for reciprocal signaling between central and egg cells which regulates reciprocal development. The chain is Small ribosomal subunit protein mS75 from Arabidopsis thaliana (Mouse-ear cress).